A 214-amino-acid chain; its full sequence is ATP phosphoribosyltransferase (214 aa).

The protein belongs to the ATP phosphoribosyltransferase family. Short subfamily. Heteromultimer composed of HisG and HisZ subunits.

Its subcellular location is the cytoplasm. It carries out the reaction 1-(5-phospho-beta-D-ribosyl)-ATP + diphosphate = 5-phospho-alpha-D-ribose 1-diphosphate + ATP. Its pathway is amino-acid biosynthesis; L-histidine biosynthesis; L-histidine from 5-phospho-alpha-D-ribose 1-diphosphate: step 1/9. Catalyzes the condensation of ATP and 5-phosphoribose 1-diphosphate to form N'-(5'-phosphoribosyl)-ATP (PR-ATP). Has a crucial role in the pathway because the rate of histidine biosynthesis seems to be controlled primarily by regulation of HisG enzymatic activity. This chain is ATP phosphoribosyltransferase, found in Leptothrix cholodnii (strain ATCC 51168 / LMG 8142 / SP-6) (Leptothrix discophora (strain SP-6)).